A 546-amino-acid polypeptide reads, in one-letter code: Chaperonin GroEL (546 aa).

Residues Thr30–Pro33, Lys51, Asp87–Thr91, Gly415, and Asp495 contribute to the ATP site.

It belongs to the chaperonin (HSP60) family. In terms of assembly, forms a cylinder of 14 subunits composed of two heptameric rings stacked back-to-back. Interacts with the co-chaperonin GroES.

It is found in the cytoplasm. It catalyses the reaction ATP + H2O + a folded polypeptide = ADP + phosphate + an unfolded polypeptide.. Functionally, together with its co-chaperonin GroES, plays an essential role in assisting protein folding. The GroEL-GroES system forms a nano-cage that allows encapsulation of the non-native substrate proteins and provides a physical environment optimized to promote and accelerate protein folding. This chain is Chaperonin GroEL, found in Brucella ovis (strain ATCC 25840 / 63/290 / NCTC 10512).